A 459-amino-acid chain; its full sequence is uncharacterized protein (459 aa).

In terms of domain architecture, TRAM spans 2-60; the sequence is NLRVKQKIPLKIKRMGINGEGIGFYKRTLVFVPGALKGEEIFCQITSVKHNFVQARLLT. Residues Cys-73, Cys-79, Cys-82, and Cys-162 each contribute to the [4Fe-4S] cluster site. 4 residues coordinate S-adenosyl-L-methionine: Gln-284, Tyr-313, Asp-334, and Asp-382. Residue Cys-409 is the Nucleophile of the active site.

It belongs to the class I-like SAM-binding methyltransferase superfamily. RNA M5U methyltransferase family.

This is an uncharacterized protein from Streptococcus mutans serotype c (strain ATCC 700610 / UA159).